The primary structure comprises 584 residues: Chondroitin proteoglycan 1 (584 aa).

The first 17 residues, 1–17 (MTLKPVLLAFLVASAYA), serve as a signal peptide directing secretion. O-linked (Xyl...) (chondroitin sulfate) serine glycosylation is present at S50. 3 Chitin-binding type-2 domains span residues 58-115 (DTDC…QCGG), 211-268 (TKSC…ECTN), and 524-578 (VPAC…ECHQ). 2 disulfides stabilise this stretch: C91/C104 and C244/C257. The segment at 267–295 (TNGSGNDEGSADETTPESSGEMPYSNGYG) is disordered. The N-linked (GlcNAc...) asparagine glycan is linked to N268. An intrachain disulfide couples C554 to C567.

In terms of tissue distribution, expressed in the germline.

Its function is as follows. Required for polar body extrusion during cytokinesis in embryo development. Affects cortical granule size. Has roles in meiotic chromosome segregation, osmotic barrier function and polarization in conjunction with cpg-2. Binds chitin. This chain is Chondroitin proteoglycan 1 (cpg-1), found in Caenorhabditis elegans.